Here is a 642-residue protein sequence, read N- to C-terminus: Serotransferrin (642 aa).

Transferrin-like domains are found at residues 1-280 and 290-621; these read GIKE…SLKK and IKWC…SLRQ. Residues Asp25 and Tyr54 each contribute to the Fe(3+) site. 3 disulfide bridges follow: Cys77/Cys158, Cys121/Cys137, and Cys186/Cys200. Hydrogencarbonate is bound by residues Thr79, Lys83, Ala85, and Gly86. Tyr152 contributes to the Fe(3+) binding site. Position 208 (His208) interacts with Fe(3+). 2 disulfides stabilise this stretch: Cys293–Cys329 and Cys303–Cys320. Position 344 (Asp344) interacts with Fe(3+). 7 cysteine pairs are disulfide-bonded: Cys354–Cys633, Cys369–Cys594, Cys402–Cys480, Cys426–Cys622, Cys436–Cys450, Cys447–Cys463, and Cys520–Cys535. Asn365 carries N-linked (GlcNAc...) asparagine glycosylation. Tyr379 contributes to the Fe(3+) binding site. Residues Thr404, Arg408, Ala410, and Gly411 each coordinate hydrogencarbonate. Tyr474 contacts Fe(3+). Position 543 (His543) interacts with Fe(3+).

This sequence belongs to the transferrin family. In terms of assembly, monomer. As to expression, brain and liver; to a lesser extent in kidney and heart.

Its subcellular location is the secreted. Its function is as follows. Transferrins are iron binding transport proteins which can bind two Fe(3+) ions in association with the binding of an anion, usually bicarbonate. This is Serotransferrin (tf) from Gadus morhua (Atlantic cod).